A 165-amino-acid chain; its full sequence is uncharacterized protein (165 aa).

The disordered stretch occupies residues 49–165 (QLKPQGPKRP…VAQQREIAQK (117 aa)). Residues 94–106 (MNNNNNYKISYTS) show a composition bias toward polar residues. Positions 120–135 (TLQRTTPQAQPTPQQP) are enriched in low complexity. Over residues 139 to 157 (SRSSGGITGAVNNRPQMVA) the composition is skewed to polar residues.

This is an uncharacterized protein from Caenorhabditis elegans.